The primary structure comprises 340 residues: UDP-3-O-(3-hydroxymyristoyl)glucosamine N-acyltransferase (340 aa).

Catalysis depends on His-239, which acts as the Proton acceptor.

Belongs to the transferase hexapeptide repeat family. LpxD subfamily. As to quaternary structure, homotrimer.

The enzyme catalyses a UDP-3-O-[(3R)-3-hydroxyacyl]-alpha-D-glucosamine + a (3R)-hydroxyacyl-[ACP] = a UDP-2-N,3-O-bis[(3R)-3-hydroxyacyl]-alpha-D-glucosamine + holo-[ACP] + H(+). The catalysed reaction is UDP-3-O-[(3R)-3-hydroxytetradecanoyl]-alpha-D-glucosamine + (3R)-hydroxytetradecanoyl-[ACP] = UDP-2-N,3-O-bis[(3R)-3-hydroxytetradecanoyl]-alpha-D-glucosamine + holo-[ACP] + H(+). The protein operates within glycolipid biosynthesis; lipid IV(A) biosynthesis; lipid IV(A) from (3R)-3-hydroxytetradecanoyl-[acyl-carrier-protein] and UDP-N-acetyl-alpha-D-glucosamine: step 3/6. In terms of biological role, catalyzes the N-acylation of UDP-3-O-(hydroxytetradecanoyl)glucosamine using 3-hydroxytetradecanoyl-ACP as the acyl donor. Is involved in the biosynthesis of lipid A, a phosphorylated glycolipid that anchors the lipopolysaccharide to the outer membrane of the cell. The protein is UDP-3-O-(3-hydroxymyristoyl)glucosamine N-acyltransferase of Pectobacterium atrosepticum (strain SCRI 1043 / ATCC BAA-672) (Erwinia carotovora subsp. atroseptica).